Consider the following 387-residue polypeptide: Patatin-12 (387 aa).

Residues 1-23 (MATTKSFLILIVMILATTSSTFA) form the signal peptide. The 199-residue stretch at 32-230 (LSIDGGGIKG…TVGDPALLSL (199 aa)) folds into the PNPLA domain. The GXGXXG signature appears at 36 to 41 (GGGIKG). Residues 75–79 (GTSTG) carry the GXSXG motif. Catalysis depends on Ser-77, which acts as the Nucleophile. Asn-115 carries N-linked (GlcNAc...) asparagine glycosylation. Asp-216 (proton acceptor) is an active-site residue. Positions 216–218 (DGG) match the DGA/G motif. Positions 322 to 385 (ENALTGTTTE…DRKKLRANKA (64 aa)) form a coiled coil.

The protein belongs to the patatin family. As to expression, tuber.

Its subcellular location is the vacuole. Its function is as follows. Probable lipolytic acyl hydrolase (LAH), an activity which is thought to be involved in the response of tubers to pathogens. The sequence is that of Patatin-12 from Solanum tuberosum (Potato).